The sequence spans 250 residues: Troponin I 1 (250 aa).

Disordered regions lie at residues 1-59 (MSQI…ERKK) and 194-250 (SVFT…ADEE). Basic and acidic residues-rich tracts occupy residues 21-45 (DAQRKAQEREAKKAEVRKRLEEAGQ) and 206-221 (DKPEWSKKKEEKKEES). Over residues 229 to 250 (PVEEEETAASEGEEEEEEADEE) the composition is skewed to acidic residues.

It belongs to the troponin I family. Strongly expressed in body wall muscle during embryogenesis, reduces during the larval stages to adult. In late-stage larvae and adults, expression is evident in the proximal gonad of both hermaphrodites and males.

In terms of biological role, troponin I is the inhibitory subunit of troponin, the thin filament regulatory complex which confers calcium-sensitivity to muscle actomyosin ATPase activity. This chain is Troponin I 1 (tni-1), found in Caenorhabditis elegans.